A 479-amino-acid polypeptide reads, in one-letter code: FK506-binding protein 4 (479 aa).

Disordered stretches follow at residues 39 to 106 (IDPD…ARKL), 141 to 162 (VKGKAPATDDDDEDAESDEGLD), and 205 to 367 (GNYV…KTTG). Acidic residues-rich tracts occupy residues 40 to 49 (DPDEAPEFDD), 68 to 93 (LDEEDSDDDYEDEDDSEDDSEDDEEV), 148 to 162 (TDDDDEDAESDEGLD), and 214 to 256 (PRDD…DLDG). Composition is skewed to basic and acidic residues over residues 272 to 299 (APKLVDAKGKKKRGADEAALEAKDDKAK), 325 to 334 (AKPEQKETKK), and 348 to 364 (SKERKPDEKKPADKAEK). The 87-residue stretch at 393 to 479 (GNTVAMRYIG…IFDVKLLEIK (87 aa)) folds into the PPIase FKBP-type domain.

The protein belongs to the FKBP-type PPIase family. FKBP3/4 subfamily. In terms of assembly, binds to histones H3 and H4.

The protein localises to the nucleus. The enzyme catalyses [protein]-peptidylproline (omega=180) = [protein]-peptidylproline (omega=0). With respect to regulation, inhibited by both FK506 and rapamycin. Its function is as follows. PPIase that acts as a histone chaperone. Histone proline isomerase that increases the rate of cis-trans isomerization at prolines on the histone H3 N-terminal tail. Proline isomerization influences H3 methylation thereby regulating gene expression. The sequence is that of FK506-binding protein 4 (fpr4) from Emericella nidulans (strain FGSC A4 / ATCC 38163 / CBS 112.46 / NRRL 194 / M139) (Aspergillus nidulans).